Reading from the N-terminus, the 425-residue chain is Endoplasmic reticulum junction formation protein lunapark (425 aa).

The N-myristoyl glycine moiety is linked to residue G2. Residues 2–45 (GGLFSRWRAKPSTVEVLENIDKEIQALEEFREKNQRLQKLWVGR) are Cytoplasmic-facing. Positions 15–41 (VEVLENIDKEIQALEEFREKNQRLQKL) form a coiled coil. A helical membrane pass occupies residues 46-66 (LIIYSSILYLFTCLIVYLWYL). The Lumenal segment spans residues 67–77 (PDEFTARLVMT). A helical membrane pass occupies residues 78-98 (LPFFAFPLIIWTLRTVLIFFF). The Cytoplasmic portion of the chain corresponds to 99-425 (SKRTERNNEA…EPSEESLVTK (327 aa)). A coiled-coil region spans residues 101-128 (RTERNNEALDDLKSQKKKILEEVMEKET). S114, S153, S177, S182, and S194 each carry phosphoserine. The tract at residues 144-242 (KKAKEFEPPS…HPPGPPLARP (99 aa)) is disordered. Pro residues predominate over residues 186 to 195 (GPPPQGPVSP). A Phosphothreonine modification is found at T211. The residue at position 222 (S222) is a Phosphoserine. The C4-type; plays a role in ER morphology zinc finger occupies 271-296 (CQQCFSHNGMALKEEFEYIAFRCAYC). Phosphoserine occurs at positions 316, 348, and 380. Residues 320–425 (RQAVEGSSST…EPSEESLVTK (106 aa)) are disordered. Over residues 384-398 (EPAENQEETENEETS) the composition is skewed to acidic residues. The residue at position 411 (S411) is a Phosphoserine.

The protein belongs to the lunapark family. As to quaternary structure, homodimer; homodimerization requires the C4-type zinc finger motif and decreases during mitosis in a phosphorylation-dependent manner. Post-translationally, myristoylated; myristoylation is necessary for the endoplasmic reticulum (ER) three-way ER tubular junction formation, but is not required neither for membrane translocation, membrane topology formation, nor for the specific localization to ER membranes. In terms of processing, phosphorylated. Phosphorylation occurs at Ser-177, Ser-182, Ser-222, Ser-316 and Ser-380 during interphase. Phosphorylation occurs at Ser-114, Ser-153, Ser-194, Thr-211 and Ser-348 during mitosis; these phosphorylations reduce both its homodimerization and the ER three-way tubular junction formation. Subject to proteasomal degradation following phosphorylation during mitosis. As to expression, expressed in most tissues at basal level, with reinforcement in distal limb buds, genital bud, and in parts of the central nervous system.

The protein resides in the endoplasmic reticulum membrane. Endoplasmic reticulum (ER)-shaping membrane protein that plays a role in determining ER morphology. Involved in the stabilization of nascent three-way ER tubular junctions within the ER network. May also play a role as a curvature-stabilizing protein within three-way ER tubular junction network. May be involved in limb and central nervous system development. This chain is Endoplasmic reticulum junction formation protein lunapark, found in Mus musculus (Mouse).